The following is a 333-amino-acid chain: MVINDIESLTDQALADVAAAQNLDHLEVLRVALLGKNGSITLQLKQLGKLPVEQRKAIGEKVNCVRDLISVALMDRKAALESAALSKRLIDERVDVTLPGRRGERGGLHPVTRTLERITEIFARLGYELVEGPEIEDDWHNFEALNFPLHHPARAMHDTFYFGDGRLLRTHTSGVQVRYMSDHRPPLRMIAAGKVYRSDSDQTHSPMFHQIEGLLIDKHATFVHLKGTLSEFLRAFFERDFEVRFRPSYFPFVEPGAEVDIAWQQSDSSVRWLEVLGCGMVHPNVLKNVGIDSECYTGFAFGLGVERFAMLRYGVDDLRAFFENDVRFLRQFS.

Residue Glu254 participates in Mg(2+) binding.

The protein belongs to the class-II aminoacyl-tRNA synthetase family. Phe-tRNA synthetase alpha subunit type 1 subfamily. As to quaternary structure, tetramer of two alpha and two beta subunits. Mg(2+) serves as cofactor.

It localises to the cytoplasm. It catalyses the reaction tRNA(Phe) + L-phenylalanine + ATP = L-phenylalanyl-tRNA(Phe) + AMP + diphosphate + H(+). The protein is Phenylalanine--tRNA ligase alpha subunit (pheS) of Xylella fastidiosa (strain 9a5c).